The primary structure comprises 544 residues: Chaperonin GroEL 1 (544 aa).

Residues 29-32, 86-90, G413, 479-481, and D495 contribute to the ATP site; these read TLGP, DGTTT, and NAA.

The protein belongs to the chaperonin (HSP60) family. As to quaternary structure, forms a cylinder of 14 subunits composed of two heptameric rings stacked back-to-back. Interacts with the co-chaperonin GroES.

Its subcellular location is the cytoplasm. It catalyses the reaction ATP + H2O + a folded polypeptide = ADP + phosphate + an unfolded polypeptide.. In terms of biological role, together with its co-chaperonin GroES, plays an essential role in assisting protein folding. The GroEL-GroES system forms a nano-cage that allows encapsulation of the non-native substrate proteins and provides a physical environment optimized to promote and accelerate protein folding. The chain is Chaperonin GroEL 1 from Trichormus variabilis (strain ATCC 29413 / PCC 7937) (Anabaena variabilis).